The chain runs to 547 residues: Chaperonin GroEL (547 aa).

Residues 30–33 (TLGP), lysine 51, 87–91 (DGTTT), glycine 415, 479–481 (NAA), and aspartate 495 each bind ATP.

This sequence belongs to the chaperonin (HSP60) family. As to quaternary structure, forms a cylinder of 14 subunits composed of two heptameric rings stacked back-to-back. Interacts with the co-chaperonin GroES.

It is found in the cytoplasm. It carries out the reaction ATP + H2O + a folded polypeptide = ADP + phosphate + an unfolded polypeptide.. In terms of biological role, together with its co-chaperonin GroES, plays an essential role in assisting protein folding. The GroEL-GroES system forms a nano-cage that allows encapsulation of the non-native substrate proteins and provides a physical environment optimized to promote and accelerate protein folding. This chain is Chaperonin GroEL, found in Pseudomonas savastanoi pv. phaseolicola (strain 1448A / Race 6) (Pseudomonas syringae pv. phaseolicola (strain 1448A / Race 6)).